The chain runs to 389 residues: Chalcone synthase 1 (389 aa).

Cysteine 163 is an active-site residue.

Belongs to the thiolase-like superfamily. Chalcone/stilbene synthases family.

The catalysed reaction is (E)-4-coumaroyl-CoA + 3 malonyl-CoA + 3 H(+) = 2',4,4',6'-tetrahydroxychalcone + 3 CO2 + 4 CoA. The protein operates within secondary metabolite biosynthesis; flavonoid biosynthesis. Functionally, the primary product of this enzyme is 4,2',4',6'-tetrahydroxychalcone (also termed naringenin-chalcone or chalcone) which can under specific conditions spontaneously isomerize into naringenin. This Citrus sinensis (Sweet orange) protein is Chalcone synthase 1 (CHS1).